The sequence spans 963 residues: Phosphofurin acidic cluster sorting protein 1 (963 aa).

The segment covering 1-22 (MAERGGAGGGPGGAGGGSGQRG) has biased composition (gly residues). 2 disordered regions span residues 1-72 (MAER…SSST) and 78-97 (VAVA…RTPA). An N-acetylalanine modification is found at alanine 2. Serine 28 bears the Phosphoserine mark. At threonine 46 the chain carries Phosphothreonine. Over residues 53-72 (ATSSSSSTSAAAASSSSSST) the composition is skewed to low complexity. Residues 168 to 175 (ETELQLTF) are involved in binding to AP-1. Tyrosine 251 bears the Phosphotyrosine mark. Basic and acidic residues predominate over residues 262–273 (GIKSKLSDRSPD). 2 disordered regions span residues 262–299 (GIKS…LHGQ) and 377–428 (NPSD…GKDT). Residues 276 to 293 (NYSEEEEESFSSEQEGSD) show a composition bias toward acidic residues. Residues 353–377 (HVSREQIREVEEDLDELYDSLEMYN) adopt a coiled-coil conformation. A phosphoserine mark is found at serine 379 and serine 381. The segment covering 406-428 (MSQSSSQTEIGSLNSKGSLGKDT) has biased composition (polar residues). Residues serine 430 and serine 495 each carry the phosphoserine modification. Disordered regions lie at residues 476–542 (PEKV…HSTQ) and 760–804 (SPST…SMSS). A compositionally biased stretch (polar residues) spans 483–496 (MKSSKTDLQGSASP). Threonine 504 is modified (phosphothreonine). Serine 519, serine 528, serine 529, serine 531, and serine 534 each carry phosphoserine. Over residues 770 to 804 (SPVVSLTVPSTSPPSSSGLSRDATATPPSSPSMSS) the composition is skewed to low complexity.

The protein belongs to the PACS family. As to quaternary structure, associates with AP-1 and AP-3 but not with AP-2 complexes. Interacts with FURIN. Forms a ternary complex with FURIN and AP-1. Interacts with NPHP1; the interaction is dependent of NPHP1 phosphorylation by CK2. Interacts with PKD2 (via acidic region). Interacts with SORL1. Interacts with WDR37. In terms of assembly, (Microbial infection) Interacts with HIV-1 Nef. (Microbial infection) Interacts with Epstein-barr virus protein BBLF1.

It is found in the golgi apparatus. It localises to the trans-Golgi network. Coat protein that is involved in the localization of trans-Golgi network (TGN) membrane proteins that contain acidic cluster sorting motifs. Controls the endosome-to-Golgi trafficking of furin and mannose-6-phosphate receptor by connecting the acidic-cluster-containing cytoplasmic domain of these molecules with the adapter-protein complex-1 (AP-1) of endosomal clathrin-coated membrane pits. Involved in HIV-1 nef-mediated removal of MHC-I from the cell surface to the TGN. Required for normal ER Ca2+ handling in lymphocytes. Together with WDR37, it plays an essential role in lymphocyte development, quiescence and survival. Required for stabilizing peripheral lymphocyte populations. This is Phosphofurin acidic cluster sorting protein 1 (PACS1) from Homo sapiens (Human).